The chain runs to 213 residues: Large ribosomal subunit protein bL25 (213 aa).

The segment covering Ala-191 to Glu-207 has biased composition (low complexity). Positions Ala-191–Ala-213 are disordered.

Belongs to the bacterial ribosomal protein bL25 family. CTC subfamily. Part of the 50S ribosomal subunit; part of the 5S rRNA/L5/L18/L25 subcomplex. Contacts the 5S rRNA. Binds to the 5S rRNA independently of L5 and L18.

Its function is as follows. This is one of the proteins that binds to the 5S RNA in the ribosome where it forms part of the central protuberance. The polypeptide is Large ribosomal subunit protein bL25 (Polynucleobacter asymbioticus (strain DSM 18221 / CIP 109841 / QLW-P1DMWA-1) (Polynucleobacter necessarius subsp. asymbioticus)).